The primary structure comprises 82 residues: Small ribosomal subunit protein bS16 (82 aa).

This sequence belongs to the bacterial ribosomal protein bS16 family.

This Marinomonas sp. (strain MWYL1) protein is Small ribosomal subunit protein bS16.